The following is a 274-amino-acid chain: HMP-PP phosphatase (274 aa).

The active-site Nucleophile is D8. Mg(2+) contacts are provided by D8, D10, and D213.

It belongs to the HAD-like hydrolase superfamily. Cof family. Mg(2+) is required as a cofactor.

It catalyses the reaction 4-amino-2-methyl-5-(diphosphooxymethyl)pyrimidine + H2O = 4-amino-2-methyl-5-(phosphooxymethyl)pyrimidine + phosphate + H(+). In terms of biological role, catalyzes the hydrolysis of 4-amino-2-methyl-5-hydroxymethylpyrimidine pyrophosphate (HMP-PP) to 4-amino-2-methyl-5-hydroxymethylpyrimidine phosphate (HMP-P). In Serratia proteamaculans (strain 568), this protein is HMP-PP phosphatase.